A 361-amino-acid chain; its full sequence is Ribosomal RNA large subunit methyltransferase M (361 aa).

Residues serine 190, 223 to 226, aspartate 242, aspartate 262, and aspartate 280 contribute to the S-adenosyl-L-methionine site; that span reads CPGG. Lysine 309 serves as the catalytic Proton acceptor.

The protein belongs to the class I-like SAM-binding methyltransferase superfamily. RNA methyltransferase RlmE family. RlmM subfamily. In terms of assembly, monomer.

The protein localises to the cytoplasm. It catalyses the reaction cytidine(2498) in 23S rRNA + S-adenosyl-L-methionine = 2'-O-methylcytidine(2498) in 23S rRNA + S-adenosyl-L-homocysteine + H(+). Functionally, catalyzes the 2'-O-methylation at nucleotide C2498 in 23S rRNA. The sequence is that of Ribosomal RNA large subunit methyltransferase M from Actinobacillus pleuropneumoniae serotype 7 (strain AP76).